Reading from the N-terminus, the 105-residue chain is MDKFYNYNSSSHQALLSFKVKPNSKQNLISNFVIINNIQYLKLSIKAIPEQGKANAEIINYLAKEWKLSRSNIEIIKGHTHSLKTILIKNINEDYLNLIINSYIK.

It belongs to the UPF0235 family.

This is UPF0235 protein RrIowa_1526 from Rickettsia rickettsii (strain Iowa).